A 282-amino-acid chain; its full sequence is Nucleotide-binding protein Shew_3314 (282 aa).

An ATP-binding site is contributed by 8–15; that stretch reads GRSGSGKS. GTP is bound at residue 56–59; sequence DVRN.

It belongs to the RapZ-like family.

Displays ATPase and GTPase activities. The sequence is that of Nucleotide-binding protein Shew_3314 from Shewanella loihica (strain ATCC BAA-1088 / PV-4).